The chain runs to 75 residues: MEKLTILLHVAAVLMSTQALIQEQRQKAKINLFSKRKPSAERWWGDNGCSLWGSCTVDAECCLGNCGGMYCSLLR.

The first 19 residues, Met-1 to Ala-19, serve as a signal peptide directing secretion. The propeptide occupies Leu-20–Glu-41. 3 cysteine pairs are disulfide-bonded: Cys-49-Cys-62, Cys-55-Cys-66, and Cys-61-Cys-71.

Belongs to the conotoxin O2 superfamily. In terms of tissue distribution, expressed by the venom duct.

It localises to the secreted. In terms of biological role, inhibits voltage-gated ion channels. This Conus victoriae (Queen Victoria cone) protein is Conotoxin Vc6.15.